Consider the following 73-residue polypeptide: RNA-binding protein Hfq (73 aa).

In terms of domain architecture, Sm spans 8–68 (DQFLNQIRKD…ISTFAPQKNV (61 aa)).

This sequence belongs to the Hfq family. As to quaternary structure, homohexamer.

In terms of biological role, RNA chaperone that binds small regulatory RNA (sRNAs) and mRNAs to facilitate mRNA translational regulation in response to envelope stress, environmental stress and changes in metabolite concentrations. Also binds with high specificity to tRNAs. This Bacillus pumilus (strain SAFR-032) protein is RNA-binding protein Hfq.